A 334-amino-acid polypeptide reads, in one-letter code: Biotin synthase (334 aa).

The 231-residue stretch at 55–285 (GEGGGVHACS…AHPSKIIKFA (231 aa)) folds into the Radical SAM core domain. Residues Cys-73, Cys-77, and Cys-80 each coordinate [4Fe-4S] cluster. 3 residues coordinate [2Fe-2S] cluster: Cys-152, Cys-213, and Lys-283.

Belongs to the radical SAM superfamily. Biotin synthase family. As to quaternary structure, homodimer. The cofactor is [4Fe-4S] cluster. It depends on [2Fe-2S] cluster as a cofactor.

The catalysed reaction is (4R,5S)-dethiobiotin + (sulfur carrier)-SH + 2 reduced [2Fe-2S]-[ferredoxin] + 2 S-adenosyl-L-methionine = (sulfur carrier)-H + biotin + 2 5'-deoxyadenosine + 2 L-methionine + 2 oxidized [2Fe-2S]-[ferredoxin]. It functions in the pathway cofactor biosynthesis; biotin biosynthesis; biotin from 7,8-diaminononanoate: step 2/2. Catalyzes the conversion of dethiobiotin (DTB) to biotin by the insertion of a sulfur atom into dethiobiotin via a radical-based mechanism. The sequence is that of Biotin synthase from Chlorobaculum parvum (strain DSM 263 / NCIMB 8327) (Chlorobium vibrioforme subsp. thiosulfatophilum).